Reading from the N-terminus, the 539-residue chain is MRVNNLTPQDLKAYGINDVQDIVYNPSYDTLYQEELNPGLEGYERGVLTNLGAVAVDTGIFTGRSPKDKYIVRDDTTRDTLWWSDKGKGKNDNKPLSQETWQHLKGLVTHQLSGKRLFIVDTFCGANADTRLSVRFITEVAWQAHFVKNMFIRPTDEELVGFKPDFIVMNGAKCTNPQWKEQGLNSENFVAFNLTERIQLIGGTWYGGEMKKGMFSVMNYLLPLKGIASMHCSANVGEKGDVAVFFGLSGTGKTTLSTDPKRRLIGDDEHGWDDDGVFNFEGGCYAKTIKLSKEAEPEIYHAIRRDALLENVTVREDGTVDFDDGSKTENTRVSYPIYHIDNIVKPVSKAGHATKVIFLTADAFGVLPPVSRLTANQTQYHFLSGFTAKLAGTERGVTEPTPTFSACFGAAFLTLHPTQYAEVLVKRMQAAGAQAYLVNTGWNGTGKRISIKDTRAIIDAILNGSLDNAETFRLPLFDLAIPTELPGVDTHILDPRNTYASPEQWQEKATALAKLFIENFEKYTDTPAGEALVSAGPKL.

Substrate contacts are provided by R64, Y206, and K212. ATP-binding positions include K212, H231, and 247–255 (GLSGTGKTT). Mn(2+) is bound by residues K212 and H231. Position 268 (D268) interacts with Mn(2+). ATP is bound by residues E296, R332, 448-449 (RI), and T454. A substrate-binding site is contributed by R332.

It belongs to the phosphoenolpyruvate carboxykinase (ATP) family. As to quaternary structure, monomer. The cofactor is Mn(2+).

Its subcellular location is the cytoplasm. The catalysed reaction is oxaloacetate + ATP = phosphoenolpyruvate + ADP + CO2. It participates in carbohydrate biosynthesis; gluconeogenesis. In terms of biological role, involved in the gluconeogenesis. Catalyzes the conversion of oxaloacetate (OAA) to phosphoenolpyruvate (PEP) through direct phosphoryl transfer between the nucleoside triphosphate and OAA. This Salmonella choleraesuis (strain SC-B67) protein is Phosphoenolpyruvate carboxykinase (ATP).